The chain runs to 300 residues: Iron/alpha-ketoglutarate-dependent dioxygenase okaE (300 aa).

Residues His-134, Asp-136, and His-210 each coordinate Fe cation.

It belongs to the PhyH family. Homodimer. The cofactor is Fe cation.

The enzyme catalyses okaramine A + 2-oxoglutarate + AH2 + O2 = 12-deshydroxyl okaramine E + succinate + A + CO2 + H2O. It catalyses the reaction 12-deshydroxyl okaramine E + 2-oxoglutarate + O2 = okaramine E + succinate + CO2. The catalysed reaction is okaramine A + 2-oxoglutarate + O2 = okaramine E + succinate + CO2. Its pathway is alkaloid biosynthesis. It participates in secondary metabolite biosynthesis; terpenoid biosynthesis. Iron/alpha-ketoglutarate-dependent dioxygenase; part of the gene cluster that mediates the biosynthesis of okaramine B, a prenylated indole alkaloid that possesses an unusual octacyclic ring system, including a four-membered azetidine ring and an eight-membered azocine ring, and that exhibits insecticidal activity against silkworm larvae. Within the pathway, okaE forms the unusual 2-dimethyl-3-methyl-azetidine ring to yield 12-deshydroxyl okaramine E from okaramine A. OkaE also catalyzes the hydroxylation of 12-deshydroxyl okaramine E to produce okaramine E. The biosynthesis begins with the NRPS okaA that condenses two tryptophan molecules into cyclo(L-Trp-L-Trp). Prenylation by the prenyltransferase okaC then leads to the formation of cyclo(N8-(alpha,alpha-dimethylallyl)-L-Trp-6a-(alpha,alpha-dime-thylallyl)-L-Trp). This is followed by indole 2,3-epoxidation by the FAD-dependent monooxygenase okaB to facilitate the formation of the hexahydropyrrolo[2,3-b]indole (HPI) moiety of okaramine C. The cytochrome P450 monooxygenase okaD then likely catalyzes formation of the eight-membered ring of okaramine A. The dioxygenase okaE further forms the unusual 2-dimethyl-3-methyl-azetidine ring to yield 12-deshydroxyl okaramine E, as well as the hydroxylation of 12-deshydroxyl okaramine E to produce okaramine E. The cytochrome P450 monoxygenase okaG converts 12-deshydroxyl okaramine E into 3-desmethyl okaramine B which is further methylated by the methyltransferase okaF into okaramine B. In a shunt pathway, okaG and okaF together are also able to convert okaramine E into okaramine D. Okaramine H is produced by nonenzymatic conversion from okaramine A. The polypeptide is Iron/alpha-ketoglutarate-dependent dioxygenase okaE (Penicillium ochrochloron).